The primary structure comprises 316 residues: Protoheme IX farnesyltransferase (316 aa).

The next 8 helical transmembrane spans lie at 35–55, 56–76, 119–139, 156–176, 183–203, 229–246, 250–272, and 283–303; these read VMVL…GHVQ, PAIG…SGCL, VVLG…TIVF, IVIG…VVTG, LILF…LALI, IVWY…PVAL, GLVY…IRVL, and AAMG…SALL.

Belongs to the UbiA prenyltransferase family. Protoheme IX farnesyltransferase subfamily.

The protein resides in the cell inner membrane. It carries out the reaction heme b + (2E,6E)-farnesyl diphosphate + H2O = Fe(II)-heme o + diphosphate. Its pathway is porphyrin-containing compound metabolism; heme O biosynthesis; heme O from protoheme: step 1/1. Functionally, converts heme B (protoheme IX) to heme O by substitution of the vinyl group on carbon 2 of heme B porphyrin ring with a hydroxyethyl farnesyl side group. In Methylobacterium radiotolerans (strain ATCC 27329 / DSM 1819 / JCM 2831 / NBRC 15690 / NCIMB 10815 / 0-1), this protein is Protoheme IX farnesyltransferase.